The following is a 3707-amino-acid chain: MKGSRKGESRAKESKPREPGTRRCAKCGRLDFILKKKMGIKSGFTFWNLVFLLTLSCVKGFIYTCGGTLKGLNGTIESPGFPYGYPNGANCTWVIIAEERNRIQIVFQSFALEEEYDYLSLYDGHPHPTNFRTRLTGFHLPPPVTSTKSVFSLRLTSDFAVSAHGFKVYYEELQSSSCGNPGVPPKGVLYGTRFDVGDKIRYSCVTGYILDGHPQLTCIANSVNTASWDFPVPICRAEDACGGTMRGSSGIISSPGFPNEYHNNADCTWTIVAEPGDTISLIFTDFQMEEKYDYLEIEGSEPPTIWLSGMNIPPPIISNKNWLRLHFVTDSNHRYRGFSAPYQGSSPLTLTASIGELEEHIRTATGAIDVASTPADVTVSSVTAVTSHRLSEEQRVQVRSLSDSGLDPNTPEDQLSPHQADTQSTSRRPRNAEQIERTKELAVVTHRVKKAIDFKSRGFKLFPGKDNSNKFSLLNEGGIKTASNLCPDPGEPENGKRFGSDFSLGSTVQFSCDEDYVLQGAKSITCQRIAEVFAAWSDHRPVCKVKTCGSNLQGPSGTFTSPNFPFQYDSNAQCVWVITAVNTNKVIQINFEEFDLEIGYDTLTIGDGGEVGDPRTVLQVLTGSFVPDLIVSMRSQMWLHLQTDESVGSVGFKVNYKEIEKESCGDPGTPLYGIREGDGFSNRDVLRFECQFGFELIGEKSIVCQENNQWSANIPICIFPCLSNFTAPMGTVLSPDYPEGYGNNLNCIWTIISDPGSRIHLSFNDFDLESQFDFLAVKDGDSPDSPILGTFTGAEVPSHLTSNSHILRLEFQADHSMSGRGFNITYNTFGHNECPDPGIPINARRFGDNFQLGSSISVICEEGFIKTQGTETITCILMDGKVMWSGPIPRCGAPCGGHFSAPSGVILSPGWPGYYKDSLNCEWVIEAEPGHSIKITFERFQTELNYDVLEVHDGPNLLSPLLGSYNGTQVPQFLFSSSNFIYLLFTTDNSRSNNGFKIHYESVTVNTYSCLDPGIPVHGRRYGHDFSIGSTVSFSCDPGYRLSHEEPLLCEKNHWWSHPLPTCDALCGGDVRGPSGTILSPGYPEFYPNSLNCTWTVDVTHGKGVQFNFHTFHLEDHHDYLLITENGSFTQPLARLTGSELPSTINAGLYGNFRAQLRFISDFSISYEGFNITFSEYNLEPCEDPGIPQYGSRVGFSFGVGDTLTFSCSLGYRLEGSSEIICLGGGRRVWSAPLPRCVAECGASATNNEGILLSPNYPLNYENNHECIYSLQVQAGKGINISARTFHLAQGDVLKIYDGKDKTTHLLGAFTGASMRGLTLSSTSNQLWLEFNSDSEGTDEGFQLVYTSFELSHCEDPGIPQFGYKISDQGHFAGSTIIYGCNPGYTLHGSSLLKCMTGERRAWDYPLPSCIAECGGRFKGESSGRILSPGYPFPYDNNLRCMWMIEVDPGNIVSLQFLAFDTEASHDILRVWDGPPENEMLLKEVSGSLIPDGIHSTLNIVTIQFDTDFYISKSGFAIQFSSSVATACRDPGVPMNGTRNGDGREPGDTVVFQCDPGYELQGQERITCIQVENRYFWQPSPPVCIAPCGGNLTGSSGFILSPNFPHPYPHSRDCDWTISVNTDYVISLAFISFSIEPNYDFLYIYDGPDSNSPLIGSFQDSKLPERIESSSNTMHLAFRSDGSVSYTGFHLEYKAKLRESCFDPGNIMNGTRLGMDYKLGSTVTYYCDAGYVLQGYSTLTCIMGDDGRPGWNRVLPSCHAPCGSRSTGSEGTVLSPNYPKNYSVDHNCVYSIAVPKEFVVFGQFVFFQTSLHDVVEVFDGPTQQSPLLSSLSGSHSGESLPLSSGNQITIRFTSVGPITAKGFHFVYQAVPRTSSTQCSSVPEPRFGRRIGNDFAVGSLVLFECNPGYILHGSRAIRCETVPNSLAQWNDSLPTCIVPCGGILTKRKGTILSPGYPEPYDNNLNCVWKITVPEGAGIQVQVVSFATEHNWDSLDFYDGGDNNAPRLGSYSGTTIPHLLNSTSNNLYLNFQSDISVSAAGFHLEYTAIGLDSCPEPQTPSSGIKVGDRYMVGDVVSFQCDQGYSLQGHSHITCMPGPVRRWNYPIPICLAQCGGAMSDFSGVILSPGFPGNYPSSLDCTWTIKLPIGFGVHLQFVNFSTETIHDYLEVRSGSSEISTVIGRLSGPQIPSSLFSTTHETSLYFHSDYSQNKQGFHIVYQAYQLQSCPDPRPFRNGFVIGNDFTVGQTISFECFPGYTLIGNSALTCLHGVSRNWNHPLPRCEALCGGNITAMNGTIYSPGYPDEYPNFQDCFWLVRVPPGNGIYINFTVLQTEPIYDFITVWDGPDQNSPQIGQFSGNTALESVYSTSNQILIKFHSDFTTSGFFVLSYHAYQLRVCQPPPPVPNAEILTEDDEFEIGDIIRYQCLPGFTLVGNAILTCRLGERLQMDGAPPVCQVLCPANELRLDSTGVILSPGYPDSYPNLQMCAWSISVEKGYNISMFVEFFQTEKEFDVLQVYDGPNIQSPVLISLSGDYSAAFNVTSNGHEVFLQWSADHGNNKKGFRIRYIAFYCSTPESPPHGYIISQTGGQLNSVVRWACDRGFRLVGKSSAVCRKSSYGYHSWDAPVPACQAISCGIPKAPTNGGILTTDYLVGTRVTYFCNDGYRLSSKELTTATCQSDGTWSNHNKTPRCVVVTCPSINSFTLDHGRWRIVNGSHYEYKTKVVFSCDPGYHGLGPASIECLPNGTWSWRTERPYCQIISCGELPTPPNGNKIGTQTSYGSTAIFTCDLGFMLVGSAVRECLSSGLWSGSETRCLAGHCGIPELIVNGQVIGENYGYRDTVVYQCNPGFRLIGSSVRICQQDHNWSGQLPSCVPVSCGHPGSPIYGRTSGNGFNFNDVVTFSCNIGYLMQGPTKAQCQANRQWSHPPPVCKVVNCSDPGIPANSKRESKIEHGNFTYGTVVFYDCNPGYFLFGSSVLICQPNGQWDKPLPECIMIDCGHPGIPPNAVLSGEKYTFGSTVHYSCTGKRSLLGQASRTCQLNGHWSGSQPHCSGDTTGTCGDPGTPGHGSRQESDFRTKSTVRFACDTGYILYGSEERTCLSNGSWTGRQPECKAVQCGNPGTTANGKVFRIDGTTFSSSVIYSCLEGYILSGPSVRQCTANGTWSGSLPNCTIISCGDPGIPANGLRYGDDFVVGQNVSYMCQPGYTIELNGSRVRTCTTNGTWSGVMPTCRAVTCSTPPQISNGRLEGTNFDWGFSISYICSAGYELSFPAVLTCVGNGTWSGEVPQCLPKFCGDPGIPSQGKREGKSFIYQSEVSFSCNSPFILVGSSTRLCQTDGTWSGSSPHCIEPTRTSCENPGVPRHGSQNNTFGFQVGSVVQFHCKKGHLLQGSTTRTCLPDLTWSGIQPECIPHSCKQPESPAHANVVGMDLPSHGYTLIYTCQPGFFLAGGTEHRVCRSDNTWTGKVPVCEAGSKILVKDPRPALGTPSPKLSVPDDVFAQNYIWKGSYNFKGRKQPMTLTVTSFNASTGRVNATLSNSDMELLLSGVYKSQEARLMLHIYLIKVPAHASVKKMKEENWAMDGFVSAEPDGATYVFQGFIKGKDYGQFGLQRLGLNTSEGSNSSNQPHGTNSSSVAIAILVPFFALIFAGFGFYLYKQRTAPKTQYTGCSVHENNNGQAAFENPMYDTNAKSVEGKAVRFDPNLNTVCTMV.

Basic and acidic residues predominate over residues 1–21 (MKGSRKGESRAKESKPREPGT). The disordered stretch occupies residues 1 to 22 (MKGSRKGESRAKESKPREPGTR). The Cytoplasmic segment spans residues 1 to 42 (MKGSRKGESRAKESKPREPGTRRCAKCGRLDFILKKKMGIKS). The helical transmembrane segment at 43–63 (GFTFWNLVFLLTLSCVKGFIY) threads the bilayer. Residues 64–3630 (TCGGTLKGLN…NQPHGTNSSS (3567 aa)) are Extracellular-facing. 4 cysteine pairs are disulfide-bonded: C65–C91, C178–C218, C204–C235, and C241–C267. In terms of domain architecture, CUB 1 spans 65-173 (CGGTLKGLNG…HGFKVYYEEL (109 aa)). 2 N-linked (GlcNAc...) asparagine glycosylation sites follow: N73 and N90. One can recognise a Sushi 1 domain in the interval 176–237 (SSCGNPGVPP…WDFPVPICRA (62 aa)). In terms of domain architecture, CUB 2 spans 241-345 (CGGTMRGSSG…RGFSAPYQGS (105 aa)). The segment at 388–437 (HRLSEEQRVQVRSLSDSGLDPNTPEDQLSPHQADTQSTSRRPRNAEQIER) is disordered. A compositionally biased stretch (polar residues) spans 411 to 426 (PEDQLSPHQADTQSTS). The Sushi 2 domain occupies 484–545 (NLCPDPGEPE…WSDHRPVCKV (62 aa)). 6 disulfides stabilise this stretch: C486–C526, C512–C543, C548–C574, C664–C704, C690–C717, and C721–C747. Residues 548 to 659 (CGSNLQGPSG…VGFKVNYKEI (112 aa)) enclose the CUB 3 domain. The Sushi 3 domain occupies 662–719 (ESCGDPGTPLYGIREGDGFSNRDVLRFECQFGFELIGEKSIVCQENNQWSANIPICIF). In terms of domain architecture, CUB 4 spans 721 to 829 (CLSNFTAPMG…RGFNITYNTF (109 aa)). N-linked (GlcNAc...) asparagine glycans are attached at residues N724 and N823. Positions 832–893 (NECPDPGIPI…WSGPIPRCGA (62 aa)) constitute a Sushi 4 domain. Disulfide bonds link C834–C875, C860–C891, and C895–C921. A CUB 5 domain is found at 895 to 1003 (CGGHFSAPSG…NGFKIHYESV (109 aa)). N-linked (GlcNAc...) asparagine glycosylation is present at N966. In terms of domain architecture, Sushi 5 spans 1008–1065 (YSCLDPGIPVHGRRYGHDFSIGSTVSFSCDPGYRLSHEEPLLCEKNHWWSHPLPTCDA). 3 disulfides stabilise this stretch: C1010–C1050, C1036–C1063, and C1067–C1093. The CUB 6 domain maps to 1067-1177 (CGGDVRGPSG…EGFNITFSEY (111 aa)). N-linked (GlcNAc...) asparagine glycans are attached at residues N1092, N1126, and N1171. Residues 1180 to 1239 (EPCEDPGIPQYGSRVGFSFGVGDTLTFSCSLGYRLEGSSEIICLGGGRRVWSAPLPRCVA) enclose the Sushi 6 domain. Cystine bridges form between C1182–C1222, C1208–C1237, and C1241–C1267. The 109-residue stretch at 1241–1349 (CGASATNNEG…EGFQLVYTSF (109 aa)) folds into the CUB 7 domain. N1280 carries N-linked (GlcNAc...) asparagine glycosylation. The Sushi 7 domain maps to 1352–1412 (SHCEDPGIPQ…WDYPLPSCIA (61 aa)). 12 disulfide bridges follow: C1354–C1395, C1381–C1410, C1414–C1441, C1528–C1568, C1554–C1584, C1588–C1614, C1701–C1741, C1727–C1758, C1762–C1788, C1878–C1918, C1904–C1935, and C1939–C1965. The region spanning 1414-1523 (CGGRFKGESS…SGFAIQFSSS (110 aa)) is the CUB 8 domain. Residues 1526-1586 (TACRDPGVPM…WQPSPPVCIA (61 aa)) enclose the Sushi 8 domain. N-linked (GlcNAc...) asparagine glycosylation occurs at N1536. In terms of domain architecture, CUB 9 spans 1588 to 1696 (CGGNLTGSSG…TGFHLEYKAK (109 aa)). N1591 and N1709 each carry an N-linked (GlcNAc...) asparagine glycan. The Sushi 9 domain maps to 1699–1760 (ESCFDPGNIM…WNRVLPSCHA (62 aa)). The 109-residue stretch at 1762-1870 (CGSRSTGSEG…KGFHFVYQAV (109 aa)) folds into the CUB 10 domain. Residue N1781 is glycosylated (N-linked (GlcNAc...) asparagine). A Sushi 10 domain is found at 1876–1937 (TQCSSVPEPR…WNDSLPTCIV (62 aa)). Residue N1929 is glycosylated (N-linked (GlcNAc...) asparagine). A CUB 11 domain is found at 1939–2047 (CGGILTKRKG…AGFHLEYTAI (109 aa)). N2019 carries N-linked (GlcNAc...) asparagine glycosylation. The 60-residue stretch at 2050–2109 (DSCPEPQTPSSGIKVGDRYMVGDVVSFQCDQGYSLQGHSHITCMPGPVRRWNYPIPICLA) folds into the Sushi 11 domain. 3 disulfides stabilise this stretch: C2052/C2092, C2078/C2107, and C2111/C2137. The CUB 12 domain maps to 2111-2219 (CGGAMSDFSG…QGFHIVYQAY (109 aa)). The N-linked (GlcNAc...) asparagine glycan is linked to N2155. The Sushi 12 domain occupies 2222–2281 (QSCPDPRPFRNGFVIGNDFTVGQTISFECFPGYTLIGNSALTCLHGVSRNWNHPLPRCEA). Disulfide bonds link C2224–C2264, C2250–C2279, C2283–C2309, C2395–C2437, C2423–C2452, C2456–C2484, C2569–C2610, C2596–C2627, C2632–C2674, C2658–C2689, C2694–C2739, C2725–C2754, C2759–C2799, C2785–C2812, C2817–C2857, C2843–C2870, C2875–C2915, C2901–C2928, C2933–C2977, C2963–C2990, C2995–C3035, C3021–C3048, C3056–C3096, C3082–C3109, C3114–C3155, C3141–C3168, C3173–C3215, C3199–C3228, C3233–C3273, C3259–C3286, C3291–C3331, C3317–C3344, C3352–C3393, C3379–C3406, C3411–C3453, and C3438–C3466. The region spanning 2283-2394 (CGGNITAMNG…LSYHAYQLRV (112 aa)) is the CUB 13 domain. N2286 and N2291 each carry an N-linked (GlcNAc...) asparagine glycan. A Sushi 13 domain is found at 2393–2454 (RVCQPPPPVP…MDGAPPVCQV (62 aa)). One can recognise a CUB 14 domain in the interval 2456 to 2567 (CPANELRLDS…KGFRIRYIAF (112 aa)). Sushi domains follow at residues 2567-2629 (FYCS…ACQA), 2630-2691 (ISCG…RCVV), 2692-2756 (VTCP…YCQI), 2757-2814 (ISCG…RCLA), 2815-2872 (GHCG…SCVP), 2873-2930 (VSCG…VCKV), 2931-2992 (VNCS…ECIM), 2993-3050 (IDCG…HCSG), 3054-3111 (GTCG…ECKA), 3112-3170 (VQCG…NCTI), 3171-3230 (ISCG…TCRA), 3231-3288 (VTCS…QCLP), 3289-3346 (KFCG…HCIE), 3350-3408 (TSCE…ECIP), and 3409-3468 (HSCK…VCEA). Low complexity predominate over residues 3052-3065 (TTGTCGDPGTPGHG). The segment at 3052 to 3071 (TTGTCGDPGTPGHGSRQESD) is disordered. The chain crosses the membrane as a helical span at residues 3631–3651 (VAIAILVPFFALIFAGFGFYL). The Cytoplasmic segment spans residues 3652–3707 (YKQRTAPKTQYTGCSVHENNNGQAAFENPMYDTNAKSVEGKAVRFDPNLNTVCTMV).

Belongs to the CSMD family. In terms of tissue distribution, expressed in the apical dendrites of postnatal hippocampal neurons (at protein level).

It is found in the cell membrane. Functionally, involved in dendrite development. The chain is CUB and sushi domain-containing protein 3 (Csmd3) from Mus musculus (Mouse).